A 125-amino-acid polypeptide reads, in one-letter code: Small ribosomal subunit protein uS13 (125 aa).

The interval 93 to 125 is disordered; that stretch reads RAGLPVRGQRTRTNARTRRGARKTVAGKKKATR. Residues 101–125 are compositionally biased toward basic residues; the sequence is QRTRTNARTRRGARKTVAGKKKATR.

This sequence belongs to the universal ribosomal protein uS13 family. Part of the 30S ribosomal subunit. Forms a loose heterodimer with protein S19. Forms two bridges to the 50S subunit in the 70S ribosome.

Functionally, located at the top of the head of the 30S subunit, it contacts several helices of the 16S rRNA. In the 70S ribosome it contacts the 23S rRNA (bridge B1a) and protein L5 of the 50S subunit (bridge B1b), connecting the 2 subunits; these bridges are implicated in subunit movement. Contacts the tRNAs in the A and P-sites. The sequence is that of Small ribosomal subunit protein uS13 from Synechococcus elongatus (strain ATCC 33912 / PCC 7942 / FACHB-805) (Anacystis nidulans R2).